Consider the following 572-residue polypeptide: Sulfite reductase [NADPH] hemoprotein beta-component (572 aa).

Positions 437, 443, 482, and 486 each coordinate [4Fe-4S] cluster. C486 contributes to the siroheme binding site.

This sequence belongs to the nitrite and sulfite reductase 4Fe-4S domain family. In terms of assembly, alpha(8)-beta(8). The alpha component is a flavoprotein, the beta component is a hemoprotein. Siroheme is required as a cofactor. [4Fe-4S] cluster serves as cofactor.

It carries out the reaction hydrogen sulfide + 3 NADP(+) + 3 H2O = sulfite + 3 NADPH + 4 H(+). The protein operates within sulfur metabolism; hydrogen sulfide biosynthesis; hydrogen sulfide from sulfite (NADPH route): step 1/1. Component of the sulfite reductase complex that catalyzes the 6-electron reduction of sulfite to sulfide. This is one of several activities required for the biosynthesis of L-cysteine from sulfate. The sequence is that of Sulfite reductase [NADPH] hemoprotein beta-component from Lysinibacillus sphaericus (strain C3-41).